The primary structure comprises 322 residues: Beta-1,3-galactosyltransferase bre-5 (322 aa).

Topologically, residues 1–16 (MFLCVRILKRKYHELS) are cytoplasmic. A helical; Signal-anchor for type II membrane protein transmembrane segment spans residues 17–37 (SFQKLLIFTITIFLLWVLGVV). At 38 to 322 (DKFRETSFGD…YEYSQLNGFE (285 aa)) the chain is on the lumenal side. Residue asparagine 150 is glycosylated (N-linked (GlcNAc...) asparagine).

Belongs to the glycosyltransferase 31 family. As to expression, expressed in the gut.

Its subcellular location is the golgi apparatus membrane. The protein operates within protein modification; protein glycosylation. Functionally, transfers N-acetylgalactosamine onto mannose groups of carbohydrate substrates. Required for susceptibility to pore-forming crystal toxins in conjunction with bre-1, bre-2, bre-3, and bre-4. Involved in resistance to the nematotoxic C.cinerea galectin Cgl2. The protein is Beta-1,3-galactosyltransferase bre-5 of Caenorhabditis elegans.